A 500-amino-acid chain; its full sequence is MFPLAYPLLFVLLGALSWWILPIISPLKRHHKLPPGPRGLPIIGSLHTLGALPHRTLQTLAKKYGPIMSMRLGSVPTIVVSSPQAAELFLKTHDNIFASRPKLQAAEYMSYGTMGMSFTAYGPHWRNIRKFVVLELLTPAKINSFVGMRREELGTVVKSIKEASAANEVVDLSAKVANIIENMTYRLLLGRTKDDRYDLKGIMNEALTLAGRFNIADFVPFLGPLDIQGLTRQFKDTGKRLDKILEFIIDEHEQNSSNGNASGDFIDDMLSLKNKPSNTHDELSKVIDRSVIKAIMIDIISAAIDTSDTSIEWILTELIKHPRAMKKCQEEIDAVVGVDRMVEETDLPNLEYVYMVVKEGLRLHPVAPLLGPHESMEDITINGYFIPKQSRVIVNSWALGRDPNVWSENAEEFLPERFEGSNVDVRGRDFQLLPFGSGRRGCPGMQLGLITVQLVVARLVHCFDWNLPNGTTPDNLDMTEKFGLTTPRVKHLLAVPKYRL.

Residues 4–24 (LAYPLLFVLLGALSWWILPII) traverse the membrane as a helical segment. Cysteine 442 lines the heme pocket.

This sequence belongs to the cytochrome P450 family. The cofactor is heme.

The protein localises to the membrane. Its function is as follows. Probable heme-thiolate monooxygenase. The sequence is that of Cytochrome P450 CYP736A12 from Panax ginseng (Korean ginseng).